The chain runs to 215 residues: Thymidylate kinase (215 aa).

Position 7–14 (7–14 (GLDGSGKT)) interacts with ATP.

It belongs to the thymidylate kinase family.

The enzyme catalyses dTMP + ATP = dTDP + ADP. Phosphorylation of dTMP to form dTDP in both de novo and salvage pathways of dTTP synthesis. The protein is Thymidylate kinase of Mycoplasmopsis agalactiae (strain NCTC 10123 / CIP 59.7 / PG2) (Mycoplasma agalactiae).